The following is a 110-amino-acid chain: uncharacterized protein (110 aa).

Positions 38–62 (SVQQNARAEEAEAAAPPAEEDSLPD) are disordered.

This is an uncharacterized protein from Mus musculus (Mouse).